A 710-amino-acid polypeptide reads, in one-letter code: Elongation factor G (710 aa).

Residues glutamate 8–isoleucine 297 form the tr-type G domain. GTP contacts are provided by residues alanine 17–threonine 24, aspartate 96–histidine 100, and asparagine 150–aspartate 153.

The protein belongs to the TRAFAC class translation factor GTPase superfamily. Classic translation factor GTPase family. EF-G/EF-2 subfamily.

The protein resides in the cytoplasm. Its function is as follows. Catalyzes the GTP-dependent ribosomal translocation step during translation elongation. During this step, the ribosome changes from the pre-translocational (PRE) to the post-translocational (POST) state as the newly formed A-site-bound peptidyl-tRNA and P-site-bound deacylated tRNA move to the P and E sites, respectively. Catalyzes the coordinated movement of the two tRNA molecules, the mRNA and conformational changes in the ribosome. This chain is Elongation factor G, found in Synechococcus sp. (strain JA-3-3Ab) (Cyanobacteria bacterium Yellowstone A-Prime).